Consider the following 121-residue polypeptide: Outer membrane lipoprotein BBA14 (121 aa).

An N-terminal signal peptide occupies residues 1–19 (MQIKNFPFLFLLNSLIIFS). Cysteine 20 carries the N-palmitoyl cysteine lipid modification. Cysteine 20 is lipidated: S-diacylglycerol cysteine.

Its subcellular location is the cell outer membrane. Its function is as follows. Outer membrane lipoprotein that could act as a component of a potential toxin-antitoxin system in B.burgdorferi which could serve as a plasmid stabilization mechanism in a growing bacterial population. In Borreliella burgdorferi (strain ATCC 35210 / DSM 4680 / CIP 102532 / B31) (Borrelia burgdorferi), this protein is Outer membrane lipoprotein BBA14.